The following is a 182-amino-acid chain: Nucleoside triphosphate/diphosphate phosphatase (182 aa).

Residue arginine 27 is the Proton donor of the active site. Asparagine 91, aspartate 107, aspartate 109, aspartate 111, aspartate 124, and glutamate 127 together coordinate Mg(2+).

The protein belongs to the Ntdp family. Mg(2+) is required as a cofactor.

The enzyme catalyses a ribonucleoside 5'-triphosphate + H2O = a ribonucleoside 5'-diphosphate + phosphate + H(+). The catalysed reaction is a ribonucleoside 5'-diphosphate + H2O = a ribonucleoside 5'-phosphate + phosphate + H(+). Functionally, has nucleoside phosphatase activity towards nucleoside triphosphates and nucleoside diphosphates. The protein is Nucleoside triphosphate/diphosphate phosphatase of Lactiplantibacillus plantarum (strain ATCC BAA-793 / NCIMB 8826 / WCFS1) (Lactobacillus plantarum).